Reading from the N-terminus, the 282-residue chain is Putative phosphoesterase 244L (282 aa).

3 residues coordinate a divalent metal cation: Asp45, Asn80, and His203.

It belongs to the metallophosphoesterase superfamily. IIV-6 244L family.

In Invertebrate iridescent virus 6 (IIV-6), this protein is Putative phosphoesterase 244L.